Here is a 191-residue protein sequence, read N- to C-terminus: NADH-quinone oxidoreductase subunit B 2 (191 aa).

[4Fe-4S] cluster contacts are provided by Cys69, Cys70, Cys134, and Cys164.

This sequence belongs to the complex I 20 kDa subunit family. In terms of assembly, NDH-1 is composed of 14 different subunits. Subunits NuoB, C, D, E, F, and G constitute the peripheral sector of the complex. [4Fe-4S] cluster serves as cofactor.

The protein resides in the cell inner membrane. It carries out the reaction a quinone + NADH + 5 H(+)(in) = a quinol + NAD(+) + 4 H(+)(out). Its function is as follows. NDH-1 shuttles electrons from NADH, via FMN and iron-sulfur (Fe-S) centers, to quinones in the respiratory chain. Couples the redox reaction to proton translocation (for every two electrons transferred, four hydrogen ions are translocated across the cytoplasmic membrane), and thus conserves the redox energy in a proton gradient. This is NADH-quinone oxidoreductase subunit B 2 from Gluconacetobacter diazotrophicus (strain ATCC 49037 / DSM 5601 / CCUG 37298 / CIP 103539 / LMG 7603 / PAl5).